The primary structure comprises 315 residues: Methionyl-tRNA formyltransferase (315 aa).

Position 113 to 116 (113 to 116) interacts with (6S)-5,6,7,8-tetrahydrofolate; it reads SLLP.

This sequence belongs to the Fmt family.

The enzyme catalyses L-methionyl-tRNA(fMet) + (6R)-10-formyltetrahydrofolate = N-formyl-L-methionyl-tRNA(fMet) + (6S)-5,6,7,8-tetrahydrofolate + H(+). In terms of biological role, attaches a formyl group to the free amino group of methionyl-tRNA(fMet). The formyl group appears to play a dual role in the initiator identity of N-formylmethionyl-tRNA by promoting its recognition by IF2 and preventing the misappropriation of this tRNA by the elongation apparatus. This is Methionyl-tRNA formyltransferase from Klebsiella pneumoniae subsp. pneumoniae (strain ATCC 700721 / MGH 78578).